Here is a 203-residue protein sequence, read N- to C-terminus: Thymidylate kinase (203 aa).

9–16 (GPEGSGKT) is an ATP binding site.

This sequence belongs to the thymidylate kinase family.

The catalysed reaction is dTMP + ATP = dTDP + ADP. Its function is as follows. Phosphorylation of dTMP to form dTDP in both de novo and salvage pathways of dTTP synthesis. The protein is Thymidylate kinase of Staphylococcus haemolyticus (strain JCSC1435).